The following is a 790-amino-acid chain: Exocyst complex component SEC15A (790 aa).

Residues 49–70 (LVHQLKNVARKKEAEIEDLCKT) are a coiled coil.

Belongs to the SEC15 family. As to quaternary structure, the exocyst complex is composed of SEC3, SEC5, SEC6, SEC8, SEC10, EXO70A1 and EXO84B.

The protein resides in the cytoplasm. Its subcellular location is the cytosol. Its function is as follows. Component of the exocyst complex involved in the docking of exocytic vesicles with fusion sites on the plasma membrane during regulated or polarized secretion. Involved in polarized cell growth and organ morphogenesis. During cytokinesis, involved in cell plate initiation, cell plate maturation and formation of new primary cell wall. The protein is Exocyst complex component SEC15A (SEC15A) of Arabidopsis thaliana (Mouse-ear cress).